Here is a 280-residue protein sequence, read N- to C-terminus: Ribosomal RNA small subunit methyltransferase A (280 aa).

Positions 28, 30, 55, 77, 103, and 122 each coordinate S-adenosyl-L-methionine.

This sequence belongs to the class I-like SAM-binding methyltransferase superfamily. rRNA adenine N(6)-methyltransferase family. RsmA subfamily.

Its subcellular location is the cytoplasm. The enzyme catalyses adenosine(1518)/adenosine(1519) in 16S rRNA + 4 S-adenosyl-L-methionine = N(6)-dimethyladenosine(1518)/N(6)-dimethyladenosine(1519) in 16S rRNA + 4 S-adenosyl-L-homocysteine + 4 H(+). Its function is as follows. Specifically dimethylates two adjacent adenosines (A1518 and A1519) in the loop of a conserved hairpin near the 3'-end of 16S rRNA in the 30S particle. May play a critical role in biogenesis of 30S subunits. The chain is Ribosomal RNA small subunit methyltransferase A from Roseobacter denitrificans (strain ATCC 33942 / OCh 114) (Erythrobacter sp. (strain OCh 114)).